A 103-amino-acid chain; its full sequence is Matrix Gla protein (103 aa).

The N-terminal stretch at 1–19 is a signal peptide; the sequence is MKSLLLLSILAALAVAALC. Glu21 bears the 4-carboxyglutamate; partial mark. Residues Ser22, Ser25, and Ser28 each carry the phosphoserine modification. Residues 51–97 enclose the Gla domain; sequence RAKAQERIRELNKPQYELNREACDDFKLCERYAMVYGYNAAYDRYFR. 4-carboxyglutamate occurs at positions 56, 60, 67, and 71. Cys73 and Cys79 are joined by a disulfide. Positions 99 to 102 are cleaved as a propeptide — removed in short form; probably by carboxypeptidase N; sequence RRGA. A propeptide (removed in long form; probably by carboxypeptidase H) is located at residue Lys103.

This sequence belongs to the osteocalcin/matrix Gla protein family. In terms of processing, requires vitamin K-dependent gamma-carboxylation for its function.

The protein resides in the secreted. Its function is as follows. Associates with the organic matrix of bone and cartilage. Thought to act as an inhibitor of bone formation. The protein is Matrix Gla protein (MGP) of Bos taurus (Bovine).